The primary structure comprises 239 residues: Lactate utilization protein A (239 aa).

It belongs to the LutA/YkgE family.

Is involved in L-lactate degradation and allows cells to grow with lactate as the sole carbon source. This is Lactate utilization protein A from Shouchella clausii (strain KSM-K16) (Alkalihalobacillus clausii).